The sequence spans 457 residues: MKTVEIIEGIASGRTSARDVCEEALATIGATDGLINAFTCRTVERARAEADAIDVRRARGEVLPPLAGLPYAVKNLFDIEGVTTLAGSKINRTLPPARADAVLVQRLKAAGAVLLGGLNMDEFAYGFTTENTHYGPTRNPHDTGRIAGGSSGGSGAAIAAGQVPLSLGSDTNGSIRVPASLCGVWGLKPTFGRLSRRGTYPFVHSIDHLGPLADSVEGLALAYDAMQGPDPLDPGCSASRIQPSVPVLSQGIAGLRIGVLGGWFRDNAGPAARAAVDVAALTLGASEVVMWPDAEIGRAAAFVITASEGGCLHLDDLRIRPQDFEPLSVDRFISGVLQPVAWYLRAQRFRRVYRDKVNALFRDWDILIAPATPISAPAIGTEWIEVNGTRHPCRPAMGLLTQPVSFAGCPVVAAPTWPGENDGMPIGVQLIAAPWNESLCLRAGKVLQDTGIARLKC.

Residues Lys-74 and Ser-150 each act as charge relay system in the active site. The Acyl-ester intermediate role is filled by Ser-174.

This sequence belongs to the amidase family. As to quaternary structure, heterotetramer consisting of 2 AtzE and 2 AtzG subunits.

The catalysed reaction is 1-carboxybiuret + H2O = urea-1,3-dicarboxylate + NH4(+). It functions in the pathway xenobiotic degradation; atrazine degradation. Hydrolyzes 1-carboxybiuret to urea-1,3-dicarboxylate and NH(3). This Pseudomonas sp. (strain ADP) protein is 1-carboxybiuret hydrolase subunit AtzE.